The primary structure comprises 662 residues: Translation factor GUF1, mitochondrial (662 aa).

The N-terminal 28 residues, 1–28, are a transit peptide targeting the mitochondrion; the sequence is MYIHSSRTVLARYGSRTPLLRPSVLGRY. Positions 62–244 constitute a tr-type G domain; it reads ENYRNFSIVA…AIVDHIPAPD (183 aa). GTP is bound by residues 71-78, 137-141, and 191-194; these read AHVDHGKS, DTPGH, and NKID.

It belongs to the TRAFAC class translation factor GTPase superfamily. Classic translation factor GTPase family. LepA subfamily.

It localises to the mitochondrion inner membrane. The catalysed reaction is GTP + H2O = GDP + phosphate + H(+). Functionally, promotes mitochondrial protein synthesis. May act as a fidelity factor of the translation reaction, by catalyzing a one-codon backward translocation of tRNAs on improperly translocated ribosomes. Binds to mitochondrial ribosomes in a GTP-dependent manner. The sequence is that of Translation factor GUF1, mitochondrial from Meyerozyma guilliermondii (strain ATCC 6260 / CBS 566 / DSM 6381 / JCM 1539 / NBRC 10279 / NRRL Y-324) (Yeast).